Reading from the N-terminus, the 336-residue chain is Fructokinase-2 (336 aa).

The protein belongs to the carbohydrate kinase PfkB family. In terms of tissue distribution, expressed in stem, sheaths, anthers, and panicles (at protein level).

The enzyme catalyses D-fructose + ATP = D-fructose 6-phosphate + ADP + H(+). It participates in glycan biosynthesis; starch biosynthesis. Its activity is regulated as follows. Strongly inhibited at high fructose concentration. Functionally, may play an important role in maintaining the flux of carbon towards starch formation in endosperm. May also be involved in a sugar-sensing pathway. This is Fructokinase-2 (FRK2) from Oryza sativa subsp. japonica (Rice).